We begin with the raw amino-acid sequence, 232 residues long: Triggering receptor expressed on myeloid cells 1 (232 aa).

The signal sequence occupies residues 1-20 (MRKAGVWGLLWMLFIEEIQA). The region spanning 21–125 (AAEVFEEKCT…DPIILFHPVR (105 aa)) is the Ig-like V-type domain. The Extracellular portion of the chain corresponds to 21–203 (AAEVFEEKCT…THVNRAPGIS (183 aa)). Residues Cys41 and Cys109 are joined by a disulfide bond. Residues 152–186 (PLPVTTKLRPRPRPRPKPVTQPIPTSADRLSSPGF) form a disordered region. A glycan (N-linked (GlcNAc...) asparagine) is linked at Asn192. Residues 204–224 (IIIPAACGLLSKTLVFIGLFA) traverse the membrane as a helical segment. Residues 225–232 (VTHRSFAS) lie on the Cytoplasmic side of the membrane.

In terms of assembly, monomer. Homomultimer; when activated. Interacts with TYROBP/DAP12. Interacts with TLR4. In terms of tissue distribution, detected in bone marrow, tongue, lung, liver, thymus, spleen, jejunum, ileum and lymph nodes.

It localises to the cell membrane. In terms of biological role, cell surface receptor that plays important roles in innate and adaptive immunity by amplifying inflammatory responses. Upon activation by various ligands such as PGLYRP1, HMGB1 or HSP70, multimerizes and forms a complex with transmembrane adapter TYROBP/DAP12. In turn, initiates a SYK-mediated cascade of tyrosine phosphorylation, activating multiple downstream mediators such as BTK, MAPK1, MAPK3 or phospholipase C-gamma. This cascade promotes the neutrophil- and macrophage-mediated release of pro-inflammatory cytokines and/or chemokines, as well as their migration and thereby amplifies inflammatory responses that are triggered by bacterial and fungal infections. By also promoting the amplification of inflammatory signals that are initially triggered by Toll-like receptor (TLR) and NOD-like receptor engagement, plays a major role in the pathophysiology of acute and chronic inflammatory diseases of different etiologies including septic shock and atherosclerosis. This is Triggering receptor expressed on myeloid cells 1 (TREM1) from Bos taurus (Bovine).